We begin with the raw amino-acid sequence, 282 residues long: ATP synthase gamma chain (282 aa).

This sequence belongs to the ATPase gamma chain family. F-type ATPases have 2 components, CF(1) - the catalytic core - and CF(0) - the membrane proton channel. CF(1) has five subunits: alpha(3), beta(3), gamma(1), delta(1), epsilon(1). CF(0) has three main subunits: a, b and c.

It is found in the cell inner membrane. Functionally, produces ATP from ADP in the presence of a proton gradient across the membrane. The gamma chain is believed to be important in regulating ATPase activity and the flow of protons through the CF(0) complex. This chain is ATP synthase gamma chain, found in Fusobacterium nucleatum subsp. nucleatum (strain ATCC 25586 / DSM 15643 / BCRC 10681 / CIP 101130 / JCM 8532 / KCTC 2640 / LMG 13131 / VPI 4355).